A 735-amino-acid polypeptide reads, in one-letter code: Photosystem I P700 chlorophyll a apoprotein A2 (735 aa).

Transmembrane regions (helical) follow at residues 46 to 69, 135 to 158, 175 to 199, 273 to 291, 333 to 356, 372 to 398, 420 to 442, and 518 to 536; these read LFST…FHIA, LYQG…LHLQ, LNHH…HVAI, IAHH…GHMY, LHFQ…QHMY, AALY…IFFI, AIIS…LYVH, and FLVH…LILV. Residues cysteine 560 and cysteine 569 each coordinate [4Fe-4S] cluster. Transmembrane regions (helical) follow at residues 576–597 and 644–666; these read AFYL…YWHW and LAVW…MFLI. Chlorophyll a contacts are provided by histidine 655, methionine 663, and tyrosine 671. Tryptophan 672 serves as a coordination point for phylloquinone. A helical transmembrane segment spans residues 708-728; that stretch reads VVGLAHFSVGYVLTYAAFLIA.

This sequence belongs to the PsaA/PsaB family. In terms of assembly, the PsaA/B heterodimer binds the P700 chlorophyll special pair and subsequent electron acceptors. PSI consists of a core antenna complex that captures photons, and an electron transfer chain that converts photonic excitation into a charge separation. The cyanobacterial PSI reaction center is composed of one copy each of PsaA,B,C,D,E,F,I,J,K,L,M and X, and forms trimeric complexes. The cofactor is PSI electron transfer chain: 5 chlorophyll a, 1 chlorophyll a', 2 phylloquinones and 3 4Fe-4S clusters. PSI core antenna: 90 chlorophyll a, 22 carotenoids, 3 phospholipids and 1 galactolipid. P700 is a chlorophyll a/chlorophyll a' dimer, A0 is one or more chlorophyll a, A1 is one or both phylloquinones and FX is a shared 4Fe-4S iron-sulfur center..

It is found in the cellular thylakoid membrane. The enzyme catalyses reduced [plastocyanin] + hnu + oxidized [2Fe-2S]-[ferredoxin] = oxidized [plastocyanin] + reduced [2Fe-2S]-[ferredoxin]. PsaA and PsaB bind P700, the primary electron donor of photosystem I (PSI), as well as the electron acceptors A0, A1 and FX. PSI is a plastocyanin/cytochrome c6-ferredoxin oxidoreductase, converting photonic excitation into a charge separation, which transfers an electron from the donor P700 chlorophyll pair to the spectroscopically characterized acceptors A0, A1, FX, FA and FB in turn. Oxidized P700 is reduced on the lumenal side of the thylakoid membrane by plastocyanin or cytochrome c6. The sequence is that of Photosystem I P700 chlorophyll a apoprotein A2 from Synechococcus sp. (strain CC9902).